Reading from the N-terminus, the 126-residue chain is Large-conductance mechanosensitive channel (126 aa).

The next 2 helical transmembrane spans lie at 14–34 and 67–87; these read VIDLAVGVIIGSAFTAIVKSL and GSFLNAIINFFIVAIVVFILV.

This sequence belongs to the MscL family. As to quaternary structure, homopentamer.

It is found in the cell membrane. Functionally, channel that opens in response to stretch forces in the membrane lipid bilayer. May participate in the regulation of osmotic pressure changes within the cell. In Lactiplantibacillus plantarum (strain ATCC BAA-793 / NCIMB 8826 / WCFS1) (Lactobacillus plantarum), this protein is Large-conductance mechanosensitive channel.